The primary structure comprises 281 residues: Undecaprenyl-diphosphatase (281 aa).

Transmembrane regions (helical) follow at residues 1–21 (MNVLQGLLLGLIQGLTEFLPI), 45–65 (WTAFIAVIQLGTMAAVLIYFA), 93–113 (SKLGWYVILGSLPVATFGLVF), 125–145 (LIVISASLIVFGILLGVSEVV), 155–175 (ISWLDALVVGFAQVMALVPGA), 195–215 (AARFSFLLSIPAVMASGLLEF), 227–247 (FLVLASATLMSAVSGYLTIAF), and 256–276 (STNVFVVYRVVLGGALLWMVF).

This sequence belongs to the UppP family.

The protein resides in the cell inner membrane. It carries out the reaction di-trans,octa-cis-undecaprenyl diphosphate + H2O = di-trans,octa-cis-undecaprenyl phosphate + phosphate + H(+). Functionally, catalyzes the dephosphorylation of undecaprenyl diphosphate (UPP). Confers resistance to bacitracin. The polypeptide is Undecaprenyl-diphosphatase (Syntrophobacter fumaroxidans (strain DSM 10017 / MPOB)).